Consider the following 166-residue polypeptide: FMN reductase (NADH) RutF (166 aa).

This sequence belongs to the non-flavoprotein flavin reductase family. RutF subfamily.

It catalyses the reaction FMNH2 + NAD(+) = FMN + NADH + 2 H(+). Its function is as follows. Catalyzes the reduction of FMN to FMNH2 which is used to reduce pyrimidine by RutA via the Rut pathway. The protein is FMN reductase (NADH) RutF of Cronobacter turicensis (strain DSM 18703 / CCUG 55852 / LMG 23827 / z3032).